Reading from the N-terminus, the 90-residue chain is uncharacterized protein (90 aa).

The disordered stretch occupies residues 62-90 (RQLKKKQAYKPDPEASFSWSANTSTRGRR). Positions 78-90 (FSWSANTSTRGRR) are enriched in polar residues.

This is an uncharacterized protein from Escherichia coli (strain K12).